The sequence spans 309 residues: MVLGRGSLCLRSLSALGATCARRGLGQALLGLSLCHSDFRKNLTVQQDIMKVELLPALTDNYMYLIIDEDTQEAAIVDPVQPQKVIEAAKKHHVKLTTVLTTHHHWDHAGGNEKLVKLEPGLKVYGGDDRIGALTHKVTHLSTLQVGSLSVKCLSTPCHTSGHICYFVSKPGSSEPSAVFTGDTLFVAGCGKFYEGTADEMYKALLEVLGRLPPDTKVYCGHEYTVNNLKFARHVEPGNAAIQEKLAWAKEKYAIGEPTVPSTLAEEFTYNPFMRVKEKTVQQHAGETDPVTTMRAIRREKDQFKVPRD.

The N-terminal 24 residues, 1-24, are a transit peptide targeting the mitochondrion; that stretch reads MVLGRGSLCLRSLSALGATCARRG. Lysine 90 bears the N6-acetyllysine mark. Histidine 103, histidine 105, aspartate 107, and histidine 108 together coordinate Zn(2+). Residue lysine 117 is modified to N6-acetyllysine. Residues histidine 159 and aspartate 183 each contribute to the Zn(2+) site. Substrate-binding positions include 192–194 and 222–224; these read KFY and HEY. Histidine 222 contributes to the Zn(2+) binding site. Lysine 230 carries the post-translational modification N6-acetyllysine; alternate. Lysine 230 is subject to N6-succinyllysine; alternate. Substrate is bound at residue 298–301; the sequence is RREK.

Belongs to the metallo-beta-lactamase superfamily. Glyoxalase II family. In terms of assembly, monomer. Zn(2+) is required as a cofactor.

It is found in the mitochondrion matrix. Its subcellular location is the cytoplasm. It carries out the reaction an S-(2-hydroxyacyl)glutathione + H2O = a 2-hydroxy carboxylate + glutathione + H(+). It catalyses the reaction (R)-S-lactoylglutathione + H2O = (R)-lactate + glutathione + H(+). It participates in secondary metabolite metabolism; methylglyoxal degradation; (R)-lactate from methylglyoxal: step 2/2. Functionally, thiolesterase that catalyzes the hydrolysis of S-D-lactoyl-glutathione to form glutathione and D-lactic acid. The sequence is that of Hydroxyacylglutathione hydrolase, mitochondrial (Hagh) from Mus musculus (Mouse).